A 436-amino-acid chain; its full sequence is Adenylosuccinate synthetase (436 aa).

GTP is bound by residues 12–18 and 40–42; these read GDEGKGK and GHT. Asp-13 (proton acceptor) is an active-site residue. 2 residues coordinate Mg(2+): Asp-13 and Gly-40. Residues 13–16, 38–41, Thr-130, Arg-144, Gln-230, Thr-245, and Arg-309 contribute to the IMP site; these read DEGK and NAGH. His-41 serves as the catalytic Proton donor. 305-311 is a substrate binding site; that stretch reads TTTGRPR. GTP is bound by residues Arg-311, 337–339, and 419–421; these read KLD and SVG.

Belongs to the adenylosuccinate synthetase family. In terms of assembly, homodimer. It depends on Mg(2+) as a cofactor.

It localises to the cytoplasm. It catalyses the reaction IMP + L-aspartate + GTP = N(6)-(1,2-dicarboxyethyl)-AMP + GDP + phosphate + 2 H(+). The protein operates within purine metabolism; AMP biosynthesis via de novo pathway; AMP from IMP: step 1/2. Its function is as follows. Plays an important role in the de novo pathway of purine nucleotide biosynthesis. Catalyzes the first committed step in the biosynthesis of AMP from IMP. This Myxococcus xanthus (strain DK1622) protein is Adenylosuccinate synthetase.